The chain runs to 284 residues: Heat stress transcription factor B-1 (284 aa).

A DNA-binding region spans residues 12 to 106 (PAPFLSKTYQ…LLTDIRRRKS (95 aa)). Residues 118–151 (VGSPSESNSGGGDDHGSSSTSSPGSSKNPGSVEN) are disordered. Residues 134-148 (SSSTSSPGSSKNPGS) show a composition bias toward low complexity. A hydrophobic repeat HR-A/B region spans residues 147–192 (GSVENMVADLSGENEKLKRENNNLSSELAAAKKQRDELVTFLTGHL). The short motif at 247 to 252 (RKKRDR) is the Nuclear localization signal element.

Belongs to the HSF family. Class B subfamily. In terms of assembly, homotrimer. Exhibits temperature-dependent phosphorylation.

The protein resides in the nucleus. Functionally, transcriptional regulator that specifically binds DNA sequence 5'-AGAAnnTTCT-3' known as heat shock promoter elements (HSE). This Arabidopsis thaliana (Mouse-ear cress) protein is Heat stress transcription factor B-1 (HSFB1).